A 431-amino-acid chain; its full sequence is Enolase (431 aa).

Gln167 is a binding site for (2R)-2-phosphoglycerate. Glu209 acts as the Proton donor in catalysis. Mg(2+) contacts are provided by Asp246, Glu289, and Asp316. Residues Lys341, Arg370, Ser371, and Lys392 each coordinate (2R)-2-phosphoglycerate. Lys341 acts as the Proton acceptor in catalysis.

The protein belongs to the enolase family. In terms of assembly, component of the RNA degradosome, a multiprotein complex involved in RNA processing and mRNA degradation. Mg(2+) is required as a cofactor.

The protein resides in the cytoplasm. The protein localises to the secreted. It localises to the cell surface. The enzyme catalyses (2R)-2-phosphoglycerate = phosphoenolpyruvate + H2O. Its pathway is carbohydrate degradation; glycolysis; pyruvate from D-glyceraldehyde 3-phosphate: step 4/5. Functionally, catalyzes the reversible conversion of 2-phosphoglycerate (2-PG) into phosphoenolpyruvate (PEP). It is essential for the degradation of carbohydrates via glycolysis. This chain is Enolase, found in Shewanella loihica (strain ATCC BAA-1088 / PV-4).